A 38-amino-acid chain; its full sequence is Photosystem II reaction center protein L (38 aa).

The helical transmembrane segment at 17–37 threads the bilayer; that stretch reads SLYWGLLLIFVLAVLFSSYFF.

It belongs to the PsbL family. PSII is composed of 1 copy each of membrane proteins PsbA, PsbB, PsbC, PsbD, PsbE, PsbF, PsbH, PsbI, PsbJ, PsbK, PsbL, PsbM, PsbT, PsbX, PsbY, PsbZ, Psb30/Ycf12, at least 3 peripheral proteins of the oxygen-evolving complex and a large number of cofactors. It forms dimeric complexes.

Its subcellular location is the plastid. The protein resides in the chloroplast thylakoid membrane. One of the components of the core complex of photosystem II (PSII). PSII is a light-driven water:plastoquinone oxidoreductase that uses light energy to abstract electrons from H(2)O, generating O(2) and a proton gradient subsequently used for ATP formation. It consists of a core antenna complex that captures photons, and an electron transfer chain that converts photonic excitation into a charge separation. This subunit is found at the monomer-monomer interface and is required for correct PSII assembly and/or dimerization. In Thalassiosira pseudonana (Marine diatom), this protein is Photosystem II reaction center protein L.